We begin with the raw amino-acid sequence, 488 residues long: 3-octaprenyl-4-hydroxybenzoate carboxy-lyase (488 aa).

Mn(2+) is bound at residue Asn172. Residues 175–177 (IYR), 189–191 (RWL), and 194–195 (RG) each bind prenylated FMN. Glu238 is a Mn(2+) binding site. Asp287 acts as the Proton donor in catalysis.

This sequence belongs to the UbiD family. Homohexamer. Prenylated FMN is required as a cofactor. Mn(2+) serves as cofactor.

It is found in the cell membrane. The enzyme catalyses a 4-hydroxy-3-(all-trans-polyprenyl)benzoate + H(+) = a 2-(all-trans-polyprenyl)phenol + CO2. The protein operates within cofactor biosynthesis; ubiquinone biosynthesis. In terms of biological role, catalyzes the decarboxylation of 3-octaprenyl-4-hydroxy benzoate to 2-octaprenylphenol, an intermediate step in ubiquinone biosynthesis. The protein is 3-octaprenyl-4-hydroxybenzoate carboxy-lyase of Pseudomonas fluorescens (strain SBW25).